The primary structure comprises 496 residues: Fibronectin type III and SPRY domain-containing protein 1 (496 aa).

Residues 4–99 (QREALRKIIT…ALESSEELLE (96 aa)) are a coiled coil. The COS domain maps to 105-162 (LQASDSEDFSQAAKEIKDGITMAPAFRLSLKAKVSDNMSHLMVDFAQERQMLQALKFL). A Fibronectin type-III domain is found at 164–268 (VPSAPTIDLA…EPVTLETPAF (105 aa)). A B30.2/SPRY domain is found at 290-477 (WDAMGGKVQD…VTTGLQVPSA (188 aa)). Residues 301 to 336 (KAREKEGKGRTASPVNSPARGTPSPKRMSSGRGGRD) form a disordered region. An omega-N-methylarginine mark is found at Arg310 and Arg320.

As to quaternary structure, oligomerization is required for binding to microtubules.

Its subcellular location is the cytoplasm. The protein resides in the cytoskeleton. The protein localises to the microtubule organizing center. It is found in the centrosome. It localises to the nucleus. Its subcellular location is the cleavage furrow. In terms of biological role, may be involved in microtubule organization and stabilization. This Mus musculus (Mouse) protein is Fibronectin type III and SPRY domain-containing protein 1 (Fsd1).